We begin with the raw amino-acid sequence, 103 residues long: L-rhamnose mutarotase (103 aa).

Tyrosine 18 contributes to the substrate binding site. The active-site Proton donor is histidine 22. Substrate is bound by residues tyrosine 41 and 76–77; that span reads WW.

Belongs to the rhamnose mutarotase family. As to quaternary structure, homodimer.

The protein localises to the cytoplasm. It carries out the reaction alpha-L-rhamnose = beta-L-rhamnose. It functions in the pathway carbohydrate metabolism; L-rhamnose metabolism. Involved in the anomeric conversion of L-rhamnose. The polypeptide is L-rhamnose mutarotase (Enterococcus faecalis (strain ATCC 700802 / V583)).